The sequence spans 77 residues: MASKAEKIVAGLGGIDNIDEIEGCITRLRTEVNDPALVNEAALKAAGAHGVVKMGTAIQVVIGTDADPIAAEIEDMM.

One can recognise a PTS EIIB type-1 domain in the interval 2 to 77 (ASKAEKIVAG…PIAAEIEDMM (76 aa)). The active-site Phosphocysteine intermediate; for EIIB activity is C24.

The catalysed reaction is N(pros)-phospho-L-histidyl-[protein] + N-acetyl-D-glucosamine(out) = N-acetyl-D-glucosamine 6-phosphate(in) + L-histidyl-[protein]. The phosphoenolpyruvate-dependent sugar phosphotransferase system (sugar PTS), a major carbohydrate active transport system, catalyzes the phosphorylation of incoming sugar substrates concomitantly with their translocation across the cell membrane. This system is involved in N-acetylglucosamine (GlcNAc) transport. This is PTS system N-acetylglucosamine-specific EIIB component from Streptomyces coelicolor (strain ATCC BAA-471 / A3(2) / M145).